A 169-amino-acid polypeptide reads, in one-letter code: Peptide methionine sulfoxide reductase MsrA (169 aa).

Residue Cys10 is part of the active site.

This sequence belongs to the MsrA Met sulfoxide reductase family.

The catalysed reaction is L-methionyl-[protein] + [thioredoxin]-disulfide + H2O = L-methionyl-(S)-S-oxide-[protein] + [thioredoxin]-dithiol. It catalyses the reaction [thioredoxin]-disulfide + L-methionine + H2O = L-methionine (S)-S-oxide + [thioredoxin]-dithiol. Functionally, has an important function as a repair enzyme for proteins that have been inactivated by oxidation. Catalyzes the reversible oxidation-reduction of methionine sulfoxide in proteins to methionine. The sequence is that of Peptide methionine sulfoxide reductase MsrA from Streptococcus agalactiae serotype III (strain NEM316).